The following is a 306-amino-acid chain: Pantothenate kinase (306 aa).

Position 91-98 (91-98) interacts with ATP; it reads GSVAVGKS.

The protein belongs to the prokaryotic pantothenate kinase family.

Its subcellular location is the cytoplasm. The enzyme catalyses (R)-pantothenate + ATP = (R)-4'-phosphopantothenate + ADP + H(+). Its pathway is cofactor biosynthesis; coenzyme A biosynthesis; CoA from (R)-pantothenate: step 1/5. In Streptococcus pyogenes serotype M18 (strain MGAS8232), this protein is Pantothenate kinase (coaA).